Consider the following 458-residue polypeptide: BPI fold-containing family B member 2 (458 aa).

An N-terminal signal peptide occupies residues 1–20; that stretch reads MAWASRLGLLLALLLPVVGA. Position 52 is a phosphothreonine; by FAM20C (Thr-52). The residue at position 60 (Ser-60) is a Phosphoserine; by FAM20C. N-linked (GlcNAc...) asparagine glycans are attached at residues Asn-96, Asn-151, Asn-293, and Asn-332. Cysteines 137 and 174 form a disulfide.

The protein belongs to the BPI/LBP/Plunc superfamily. BPI/LBP family. Highly expressed in tonsils, especially in hypertrophic tonsils. Detected at very low levels in fetal liver.

The protein localises to the secreted. The protein is BPI fold-containing family B member 2 (BPIFB2) of Homo sapiens (Human).